Reading from the N-terminus, the 147-residue chain is Small ribosomal subunit protein uS9 (147 aa).

The disordered stretch occupies residues lysine 128–arginine 147.

The protein belongs to the universal ribosomal protein uS9 family.

This chain is Small ribosomal subunit protein uS9 (rpsI), found in Aquifex aeolicus (strain VF5).